We begin with the raw amino-acid sequence, 373 residues long: Putative glutamate--cysteine ligase 2-1 (373 aa).

The protein belongs to the glutamate--cysteine ligase type 2 family. YbdK subfamily.

It carries out the reaction L-cysteine + L-glutamate + ATP = gamma-L-glutamyl-L-cysteine + ADP + phosphate + H(+). Functionally, ATP-dependent carboxylate-amine ligase which exhibits weak glutamate--cysteine ligase activity. The protein is Putative glutamate--cysteine ligase 2-1 of Legionella pneumophila (strain Lens).